The following is a 36-amino-acid chain: Photosystem II reaction center protein M (36 aa).

A helical membrane pass occupies residues 5–25 (ILGVIAVALFILIPTSFLLIL).

Belongs to the PsbM family. In terms of assembly, PSII is composed of 1 copy each of membrane proteins PsbA, PsbB, PsbC, PsbD, PsbE, PsbF, PsbH, PsbI, PsbJ, PsbK, PsbL, PsbM, PsbT, PsbY, PsbZ, Psb30/Ycf12, at least 3 peripheral proteins of the oxygen-evolving complex and a large number of cofactors. It forms dimeric complexes.

The protein localises to the plastid. The protein resides in the chloroplast thylakoid membrane. Functionally, one of the components of the core complex of photosystem II (PSII). PSII is a light-driven water:plastoquinone oxidoreductase that uses light energy to abstract electrons from H(2)O, generating O(2) and a proton gradient subsequently used for ATP formation. It consists of a core antenna complex that captures photons, and an electron transfer chain that converts photonic excitation into a charge separation. This subunit is found at the monomer-monomer interface. This Bigelowiella natans (Pedinomonas minutissima) protein is Photosystem II reaction center protein M.